A 690-amino-acid chain; its full sequence is Hypersensitivity response secretion protein HrcV (690 aa).

6 consecutive transmembrane segments (helical) span residues 14–36, 48–72, 104–128, 196–216, 229–253, and 291–315; these read IGIA…TMLI, VVLL…LLLF, LVVG…FIVI, AIAG…IGIT, FAVL…AAGV, and LLMG…LIFV.

Belongs to the FHIPEP (flagella/HR/invasion proteins export pore) family.

The protein localises to the cell inner membrane. Its function is as follows. Involved in the secretion of PopA, a proteinaceous elicitor of the hypersensitivity response in plants. The protein is Hypersensitivity response secretion protein HrcV (hrcV) of Ralstonia nicotianae (strain ATCC BAA-1114 / GMI1000) (Ralstonia solanacearum).